The following is a 323-amino-acid chain: Annexin A3 (323 aa).

N-acetylalanine is present on Ala2. Annexin repeat units lie at residues 18 to 89 (FSPS…ALVT), 90 to 161 (APAL…TLAD), 173 to 245 (HLAK…AIVH), and 249 to 320 (NTPA…KICG). Lys177 carries the N6-acetyllysine modification. Residue Thr267 is modified to Phosphothreonine.

The protein belongs to the annexin family.

Inhibitor of phospholipase A2, also possesses anti-coagulant properties. The protein is Annexin A3 (Anxa3) of Mus musculus (Mouse).